A 148-amino-acid chain; its full sequence is Deoxyuridine 5'-triphosphate nucleotidohydrolase (148 aa).

Substrate is bound by residues 67–69 (RSG), N80, 84–86 (LID), and M94.

This sequence belongs to the dUTPase family. The cofactor is Mg(2+).

The catalysed reaction is dUTP + H2O = dUMP + diphosphate + H(+). The protein operates within pyrimidine metabolism; dUMP biosynthesis; dUMP from dCTP (dUTP route): step 2/2. Its function is as follows. This enzyme is involved in nucleotide metabolism: it produces dUMP, the immediate precursor of thymidine nucleotides and it decreases the intracellular concentration of dUTP so that uracil cannot be incorporated into DNA. This is Deoxyuridine 5'-triphosphate nucleotidohydrolase from Paraburkholderia xenovorans (strain LB400).